The following is a 125-amino-acid chain: Large ribosomal subunit protein bL12 (125 aa).

It belongs to the bacterial ribosomal protein bL12 family. As to quaternary structure, homodimer. Part of the ribosomal stalk of the 50S ribosomal subunit. Forms a multimeric L10(L12)X complex, where L10 forms an elongated spine to which 2 to 4 L12 dimers bind in a sequential fashion. Binds GTP-bound translation factors.

In terms of biological role, forms part of the ribosomal stalk which helps the ribosome interact with GTP-bound translation factors. Is thus essential for accurate translation. This chain is Large ribosomal subunit protein bL12, found in Campylobacter concisus (strain 13826).